The primary structure comprises 395 residues: Phosphoglycerate kinase (395 aa).

Residues 21 to 23, R36, 59 to 62, R114, and R147 contribute to the substrate site; these read DLN and HLGR. Residues K198, E320, and 346–349 contribute to the ATP site; that span reads GGDT.

It belongs to the phosphoglycerate kinase family. In terms of assembly, monomer.

It is found in the cytoplasm. It catalyses the reaction (2R)-3-phosphoglycerate + ATP = (2R)-3-phospho-glyceroyl phosphate + ADP. It participates in carbohydrate degradation; glycolysis; pyruvate from D-glyceraldehyde 3-phosphate: step 2/5. This Nitrosospira multiformis (strain ATCC 25196 / NCIMB 11849 / C 71) protein is Phosphoglycerate kinase.